The following is a 444-amino-acid chain: GTPase Der (444 aa).

2 consecutive EngA-type G domains span residues 2 to 167 and 173 to 349; these read LKVA…LKEI and FKFC…ENLN. GTP contacts are provided by residues 8–15, 55–59, 118–121, 179–186, 226–230, and 291–294; these read GKPNVGKS, DTGGL, NKSE, GRPNVGKS, DTAGI, and NKWD. The 85-residue stretch at 350–434 folds into the KH-like domain; the sequence is LKFNSKILTD…PITLYFKNKT (85 aa).

The protein belongs to the TRAFAC class TrmE-Era-EngA-EngB-Septin-like GTPase superfamily. EngA (Der) GTPase family. As to quaternary structure, associates with the 50S ribosomal subunit.

Its function is as follows. GTPase that plays an essential role in the late steps of ribosome biogenesis. The chain is GTPase Der from Malacoplasma penetrans (strain HF-2) (Mycoplasma penetrans).